Consider the following 494-residue polypeptide: Probable cytosol aminopeptidase (494 aa).

Positions 260 and 265 each coordinate Mn(2+). The active site involves K272. The Mn(2+) site is built by D283, D342, and E344. R346 is an active-site residue.

The protein belongs to the peptidase M17 family. Requires Mn(2+) as cofactor.

It localises to the cytoplasm. It catalyses the reaction Release of an N-terminal amino acid, Xaa-|-Yaa-, in which Xaa is preferably Leu, but may be other amino acids including Pro although not Arg or Lys, and Yaa may be Pro. Amino acid amides and methyl esters are also readily hydrolyzed, but rates on arylamides are exceedingly low.. The catalysed reaction is Release of an N-terminal amino acid, preferentially leucine, but not glutamic or aspartic acids.. Functionally, presumably involved in the processing and regular turnover of intracellular proteins. Catalyzes the removal of unsubstituted N-terminal amino acids from various peptides. The protein is Probable cytosol aminopeptidase of Bacillus cereus (strain ATCC 14579 / DSM 31 / CCUG 7414 / JCM 2152 / NBRC 15305 / NCIMB 9373 / NCTC 2599 / NRRL B-3711).